We begin with the raw amino-acid sequence, 832 residues long: Protein P (832 aa).

Residues 1 to 177 (MPLSYQHFRK…FCGSPYSWEQ (177 aa)) form a terminal protein domain (TP) region. Residues 178–335 (ELQHGAESFH…YCLSHIVNLL (158 aa)) are spacer. Positions 186–206 (FHQQSSGILSRPSVGSSLQSK) are enriched in polar residues. Disordered stretches follow at residues 186 to 255 (FHQQ…GHNA) and 280 to 305 (TSEN…RSQS). The span at 210 to 220 (SRLGLQSQQGH) shows a compositional bias: low complexity. The polymerase/reverse transcriptase domain (RT) stretch occupies residues 336-679 (EDWGPCAEHG…YLNLYPVARQ (344 aa)). A Reverse transcriptase domain is found at 346–589 (EHHIRIPRTP…YSLNFMGYVI (244 aa)). Asp-418, Asp-540, and Asp-541 together coordinate Mg(2+).

This sequence belongs to the hepadnaviridae P protein family.

It catalyses the reaction DNA(n) + a 2'-deoxyribonucleoside 5'-triphosphate = DNA(n+1) + diphosphate. It carries out the reaction Endonucleolytic cleavage to 5'-phosphomonoester.. With respect to regulation, activated by host HSP70 and HSP40 in vitro to be able to bind the epsilon loop of the pgRNA. Because deletion of the RNase H region renders the protein partly chaperone-independent, the chaperones may be needed indirectly to relieve occlusion of the RNA-binding site by this domain. Inhibited by several reverse-transcriptase inhibitors: Lamivudine, Adefovir and Entecavir. Multifunctional enzyme that converts the viral RNA genome into dsDNA in viral cytoplasmic capsids. This enzyme displays a DNA polymerase activity that can copy either DNA or RNA templates, and a ribonuclease H (RNase H) activity that cleaves the RNA strand of RNA-DNA heteroduplexes in a partially processive 3'- to 5'-endonucleasic mode. Neo-synthesized pregenomic RNA (pgRNA) are encapsidated together with the P protein, and reverse-transcribed inside the nucleocapsid. Initiation of reverse-transcription occurs first by binding the epsilon loop on the pgRNA genome, and is initiated by protein priming, thereby the 5'-end of (-)DNA is covalently linked to P protein. Partial (+)DNA is synthesized from the (-)DNA template and generates the relaxed circular DNA (RC-DNA) genome. After budding and infection, the RC-DNA migrates in the nucleus, and is converted into a plasmid-like covalently closed circular DNA (cccDNA). The activity of P protein does not seem to be necessary for cccDNA generation, and is presumably released from (+)DNA by host nuclear DNA repair machinery. The polypeptide is Protein P (Hepatitis B virus genotype D subtype ayw (isolate Australia/AustKW/1991) (HBV-D)).